Consider the following 43-residue polypeptide: uncharacterized protein (43 aa).

Residues 13 to 43 (QLPRLSRPRQSHLPAQTPQPRLSYPKTRRQI) form a disordered region.

This is an uncharacterized protein from Clover yellow mosaic virus (CYMV).